The sequence spans 552 residues: Amino-acid acetyltransferase, mitochondrial (552 aa).

The N-terminal 32 residues, 1–32 (MIKTWIRCLTTEVRYHQPNAHGRSLVMSVLNS), are a transit peptide targeting the mitochondrion. The 167-residue stretch at 379 to 545 (QTGKSDPVSK…LRDYAKYVRD (167 aa)) folds into the N-acetyltransferase domain.

This sequence belongs to the acetyltransferase family.

The protein localises to the mitochondrion. It carries out the reaction L-glutamate + acetyl-CoA = N-acetyl-L-glutamate + CoA + H(+). The protein operates within amino-acid biosynthesis; L-arginine biosynthesis; N(2)-acetyl-L-ornithine from L-glutamate: step 1/4. N-acetylglutamate synthase involved in arginine biosynthesis. This is Amino-acid acetyltransferase, mitochondrial (ARG2) from Kluyveromyces lactis (strain ATCC 8585 / CBS 2359 / DSM 70799 / NBRC 1267 / NRRL Y-1140 / WM37) (Yeast).